Here is a 418-residue protein sequence, read N- to C-terminus: Argininosuccinate synthase (418 aa).

Residues 14-22 (AYSGGLDTS) and Ala42 each bind ATP. Residues Tyr94 and Ser99 each contribute to the L-citrulline site. Gly124 lines the ATP pocket. L-aspartate contacts are provided by Thr126, Asn130, and Asp131. Asn130 provides a ligand contact to L-citrulline. L-citrulline is bound by residues Arg134, Ser183, Ser192, Glu273, and Tyr285.

Belongs to the argininosuccinate synthase family. Type 1 subfamily. In terms of assembly, homotetramer.

Its subcellular location is the cytoplasm. The catalysed reaction is L-citrulline + L-aspartate + ATP = 2-(N(omega)-L-arginino)succinate + AMP + diphosphate + H(+). It functions in the pathway amino-acid biosynthesis; L-arginine biosynthesis; L-arginine from L-ornithine and carbamoyl phosphate: step 2/3. This is Argininosuccinate synthase from Colwellia psychrerythraea (strain 34H / ATCC BAA-681) (Vibrio psychroerythus).